Reading from the N-terminus, the 201-residue chain is Ras-related protein Rab-1B (201 aa).

Methionine 1 is modified (N-acetylmethionine). Residues serine 17, glycine 18, valine 19, glycine 20, lysine 21, serine 22, cysteine 23, tyrosine 33, threonine 34, glutamate 35, serine 36, serine 39, and threonine 40 each coordinate GTP. Residue serine 22 coordinates Mg(2+). A Switch 1 motif is present at residues 30–45 (DDTYTESYISTIGVDF). Threonine 40 and aspartate 63 together coordinate Mg(2+). Residues 64-83 (TAGQERFRTVTSSYYRGAHG) form a switch 2 region; required for interaction with REP1/CHM region. Residues 65–80 (AGQERFRTVTSSYYRG) carry the Switch 2 motif. 7 residues coordinate GTP: glycine 66, asparagine 121, lysine 122, aspartate 124, serine 151, alanine 152, and lysine 153. Residues 173–201 (MGPGAASGGERPNLKIDSTPVKSASGGCC) form a disordered region. 2 S-geranylgeranyl cysteine lipidation sites follow: cysteine 200 and cysteine 201. Cysteine 201 is modified (cysteine methyl ester).

Belongs to the small GTPase superfamily. Rab family. Interacts with MICAL1 and MICAL2. Interacts (in GTP-bound form) with MICALCL, MICAL1 and MILCAL3. Interacts with GDI1; the interaction requires the GDP-bound state. Interacts with CHM/REP1; the interaction requires the GDP-bound form and is necessary for prenylation by GGTase II. Interacts with RabGAP TBC1D20. Interacts (in GDP-bound form) with lipid phosphatase MTMR6 (via GRAM domain); the interaction regulates MTMR6 recruitment to the endoplasmic reticulum-Golgi intermediate compartment. Interacts (in GDP-bound form) with lipid phosphatase MTMR7. The cofactor is Mg(2+). In terms of processing, prenylated; by GGTase II, only after interaction of the substrate with Rab escort protein 1 (REP1).

The protein localises to the cytoplasm. It localises to the membrane. Its subcellular location is the preautophagosomal structure membrane. The protein resides in the perinuclear region. It carries out the reaction GTP + H2O = GDP + phosphate + H(+). Regulated by guanine nucleotide exchange factors (GEFs) which promote the exchange of bound GDP for free GTP. Regulated by GTPase activating proteins (GAPs) including TBC1D20 which increases the GTP hydrolysis activity. Inhibited by GDP dissociation inhibitors (GDIs). Its function is as follows. The small GTPases Rab are key regulators of intracellular membrane trafficking, from the formation of transport vesicles to their fusion with membranes. Rabs cycle between an inactive GDP-bound form and an active GTP-bound form that is able to recruit to membranes different set of downstream effectors directly responsible for vesicle formation, movement, tethering and fusion. Plays a role in the initial events of the autophagic vacuole development which take place at specialized regions of the endoplasmic reticulum. Regulates vesicular transport between the endoplasmic reticulum and successive Golgi compartments. Required to modulate the compacted morphology of the Golgi. Promotes the recruitment of lipid phosphatase MTMR6 to the endoplasmic reticulum-Golgi intermediate compartment. In Rattus norvegicus (Rat), this protein is Ras-related protein Rab-1B (Rab1b).